A 293-amino-acid polypeptide reads, in one-letter code: Formamidopyrimidine-DNA glycosylase (293 aa).

Pro-2 acts as the Schiff-base intermediate with DNA in catalysis. The Proton donor role is filled by Glu-3. The active-site Proton donor; for beta-elimination activity is the Lys-58. 3 residues coordinate DNA: His-104, Arg-123, and Lys-166. An FPG-type zinc finger spans residues 257 to 293 (KVYDREGETCKTPACGGTIKRFTQNGRSTFWCPKCQK). The active-site Proton donor; for delta-elimination activity is Arg-283.

Belongs to the FPG family. Monomer. Requires Zn(2+) as cofactor.

It catalyses the reaction Hydrolysis of DNA containing ring-opened 7-methylguanine residues, releasing 2,6-diamino-4-hydroxy-5-(N-methyl)formamidopyrimidine.. The enzyme catalyses 2'-deoxyribonucleotide-(2'-deoxyribose 5'-phosphate)-2'-deoxyribonucleotide-DNA = a 3'-end 2'-deoxyribonucleotide-(2,3-dehydro-2,3-deoxyribose 5'-phosphate)-DNA + a 5'-end 5'-phospho-2'-deoxyribonucleoside-DNA + H(+). Involved in base excision repair of DNA damaged by oxidation or by mutagenic agents. Acts as a DNA glycosylase that recognizes and removes damaged bases. Has a preference for oxidized purines, such as 7,8-dihydro-8-oxoguanine (8-oxoG). Has AP (apurinic/apyrimidinic) lyase activity and introduces nicks in the DNA strand. Cleaves the DNA backbone by beta-delta elimination to generate a single-strand break at the site of the removed base with both 3'- and 5'-phosphates. In Bradyrhizobium diazoefficiens (strain JCM 10833 / BCRC 13528 / IAM 13628 / NBRC 14792 / USDA 110), this protein is Formamidopyrimidine-DNA glycosylase.